The sequence spans 442 residues: CAAX prenyl protease 1 homolog (442 aa).

The Lumenal segment spans residues 1–62; that stretch reads MDASCLFKAL…KARDYKIDNH (62 aa). The helical transmembrane segment at 63-83 threads the bilayer; sequence LFGFFHSWFNQLLLTAQLIGG. Position 84 (Y84) is a topological domain, cytoplasmic. A helical transmembrane segment spans residues 85–105; sequence YPFLWYATASYPLHVAVFLSI. At 106–146 the chain is on the lumenal side; sequence NSIIETIIDLPWDLYSTFIIEDAHGFNKQTIGFYFVDKIKK. The helical transmembrane segment at 147–167 threads the bilayer; it reads MLVGFALTMPIVYGIEWIIVN. The Cytoplasmic portion of the chain corresponds to 168 to 170; that stretch reads GGP. The chain crosses the membrane as a helical span at residues 171 to 191; the sequence is YFFVYIWLFVSVVVLLLMTIY. Topologically, residues 192-311 are lumenal; it reads PTFIAPLFDK…ELGHWALWHT (120 aa). A Zn(2+)-binding site is contributed by H301. E302 is a catalytic residue. Residue H305 participates in Zn(2+) binding. A helical membrane pass occupies residues 312–332; it reads LINLVITEVNLFFSFAVFGYF. The Cytoplasmic segment spans residues 333–349; that stretch reads YKWEALYQGFGYHDTPP. The helical transmembrane segment at 350-370 threads the bilayer; sequence VIGMMLIFQFVLALYNQLASI. Over 371–442 the chain is Lumenal; sequence GMVIHSRSAE…AVRAFQAKNK (72 aa). Residue E380 participates in Zn(2+) binding. The active-site Proton donor is the D384.

The protein belongs to the peptidase M48A family. It depends on Zn(2+) as a cofactor.

It localises to the endoplasmic reticulum membrane. Its subcellular location is the membrane. The enzyme catalyses Hydrolyzes the peptide bond -P2-(S-farnesyl or geranylgeranyl)C-P1'-P2'-P3'-COOH where P1' and P2' are amino acids with aliphatic side chains and P3' is any C-terminal residue.. Proteolytically removes the C-terminal three residues of farnesylated proteins. The protein is CAAX prenyl protease 1 homolog of Caenorhabditis elegans.